The chain runs to 110 residues: Protein ripply3 (110 aa).

The WRPW motif signature appears at 18–21 (WRPW). A ripply homology domain region spans residues 50-85 (HPVRLFLPRSRMQEYLSRLGSSVLASFPVQATLHFY). The segment covering 87-99 (DEDSSSEEEEDEE) has biased composition (acidic residues). The interval 87–110 (DEDSSSEEEEDEEHANTRCRLWRP) is disordered.

This sequence belongs to the ripply family.

It localises to the nucleus. Probable transcriptional regulator involved in developmental processes. This is Protein ripply3 (ripply3) from Danio rerio (Zebrafish).